We begin with the raw amino-acid sequence, 493 residues long: MSLLKMEYNLYTELKKMTCGQSLSLFNEDGDFVEVEPGSSFKFLIPKGFYSSPSVKTSLVFETLTTTDNKITSINPTNAPKLYPIQCKVVSEVVSNMRKMIELKRPLYITLHLACGFGKTITTCYLMAIHGRKTVICVPNKMLIHQWKTQVEAVGLEHKISIDGVSILLKELKTQSPDVLIVVSRHLTNDAFCKYINKHYDLFILDESHTYNLMNNTAVTRFLAYYPPMMCYFLTATPRPSNRIYCNSIINIAKLSDLKKTIYVVDSFFEPYSTDNIRHMIKRLDGASNKYHIYTEKLLSVDEPRNQLILNTLVEEFKSGTINRILVITKLREHMVLFYKRLLNLFGPEVVFIGDAQNRRTPDMVKSIKELNRFIFVSTLFYSGTGLDIPSLDSLFICSAVINNMQIEQLLGRVCRETALLDRRVYVFPNTSIKEIKYMIGNFVQRIISLSVDKLGFKQESYRKHQESDPTSACTTSSREERVLNRIFNSQNR.

The region spanning 100 to 256 (MIELKRPLYI…NSIINIAKLS (157 aa)) is the Helicase ATP-binding domain. 113–120 (LACGFGKT) provides a ligand contact to ATP. The short motif at 206 to 209 (DESH) is the DESH box element.

It belongs to the helicase family. Poxviruses subfamily. In terms of assembly, interacts with G2. Might be part of a transcription complex composed at least of G2, A18, and H5.

Its subcellular location is the virion. DNA helicase which seems to act as a postreplicative transcription termination factor. Involved in ATP-dependent release of nascent RNA. Forms a stable complex with single-stranded DNA, and to a lesser extent RNA. The sequence is that of Transcript termination protein A18 from Camelus.